Reading from the N-terminus, the 149-residue chain is Protein SprT-like (149 aa).

The 142-residue stretch at 6 to 147 (LQALVEQISI…VCGRCRSKLK (142 aa)) folds into the SprT-like domain. H67 provides a ligand contact to Zn(2+). The active site involves E68. H71 serves as a coordination point for Zn(2+).

This sequence belongs to the SprT family. It depends on Zn(2+) as a cofactor.

The protein resides in the cytoplasm. This is Protein SprT-like from Geobacillus kaustophilus (strain HTA426).